The sequence spans 291 residues: Signal peptidase I (291 aa).

The Cytoplasmic portion of the chain corresponds to 1–45; that stretch reads MTMKKLTSTTTTLWDNKLFINNLKNFMQTNTESNNNKTTAQEWKS. A helical membrane pass occupies residues 46-66; sequence FILVVVIALMIRILIIESFVV. Residues 67 to 291 lie on the Periplasmic side of the membrane; the sequence is PTGSMKATIL…IFRNLYSIED (225 aa). Active-site residues include Ser-70 and Lys-133.

This sequence belongs to the peptidase S26 family.

It localises to the cell inner membrane. The catalysed reaction is Cleavage of hydrophobic, N-terminal signal or leader sequences from secreted and periplasmic proteins.. This chain is Signal peptidase I (lepB), found in Rickettsia bellii (strain RML369-C).